Reading from the N-terminus, the 435-residue chain is tRNA-2-methylthio-N(6)-dimethylallyladenosine synthase (435 aa).

The region spanning Lys2 to Asn117 is the MTTase N-terminal domain. 6 residues coordinate [4Fe-4S] cluster: Cys11, Cys47, Cys80, Cys154, Cys158, and Cys161. A Radical SAM core domain is found at Phe140–Tyr370. Residues Ser373 to Val435 enclose the TRAM domain.

It belongs to the methylthiotransferase family. MiaB subfamily. Monomer. The cofactor is [4Fe-4S] cluster.

Its subcellular location is the cytoplasm. The enzyme catalyses N(6)-dimethylallyladenosine(37) in tRNA + (sulfur carrier)-SH + AH2 + 2 S-adenosyl-L-methionine = 2-methylsulfanyl-N(6)-dimethylallyladenosine(37) in tRNA + (sulfur carrier)-H + 5'-deoxyadenosine + L-methionine + A + S-adenosyl-L-homocysteine + 2 H(+). Its function is as follows. Catalyzes the methylthiolation of N6-(dimethylallyl)adenosine (i(6)A), leading to the formation of 2-methylthio-N6-(dimethylallyl)adenosine (ms(2)i(6)A) at position 37 in tRNAs that read codons beginning with uridine. The protein is tRNA-2-methylthio-N(6)-dimethylallyladenosine synthase of Fusobacterium nucleatum subsp. nucleatum (strain ATCC 25586 / DSM 15643 / BCRC 10681 / CIP 101130 / JCM 8532 / KCTC 2640 / LMG 13131 / VPI 4355).